Reading from the N-terminus, the 157-residue chain is NADPH-dependent 7-cyano-7-deazaguanine reductase (157 aa).

The Thioimide intermediate role is filled by cysteine 55. Aspartate 62 serves as the catalytic Proton donor. Residues 77–79 (VES) and 96–97 (HE) each bind substrate.

It belongs to the GTP cyclohydrolase I family. QueF type 1 subfamily.

The protein localises to the cytoplasm. It carries out the reaction 7-aminomethyl-7-carbaguanine + 2 NADP(+) = 7-cyano-7-deazaguanine + 2 NADPH + 3 H(+). It functions in the pathway tRNA modification; tRNA-queuosine biosynthesis. Catalyzes the NADPH-dependent reduction of 7-cyano-7-deazaguanine (preQ0) to 7-aminomethyl-7-deazaguanine (preQ1). The protein is NADPH-dependent 7-cyano-7-deazaguanine reductase of Neisseria gonorrhoeae (strain ATCC 700825 / FA 1090).